Reading from the N-terminus, the 599-residue chain is Translation initiation factor IF-2 (599 aa).

The tr-type G domain maps to 111-278 (PRPPIITVMG…SILLLAEILE (168 aa)). Residues 120–127 (GHVDHGKT) are G1. 120–127 (GHVDHGKT) provides a ligand contact to GTP. Positions 145–149 (GITQH) are G2. Residues 166-169 (DTPG) form a G3 region. GTP-binding positions include 166–170 (DTPGH) and 220–223 (NKMD). The interval 220–223 (NKMD) is G4. Residues 256 to 258 (SAL) are G5.

The protein belongs to the TRAFAC class translation factor GTPase superfamily. Classic translation factor GTPase family. IF-2 subfamily.

It localises to the cytoplasm. One of the essential components for the initiation of protein synthesis. Protects formylmethionyl-tRNA from spontaneous hydrolysis and promotes its binding to the 30S ribosomal subunits. Also involved in the hydrolysis of GTP during the formation of the 70S ribosomal complex. This chain is Translation initiation factor IF-2, found in Mesomycoplasma hyopneumoniae (strain 7448) (Mycoplasma hyopneumoniae).